A 159-amino-acid chain; its full sequence is MDKPRKENEEEPQSAPKTDEERPPVEHSPEKQSPEEQSSEEQSSEEEFFPEELLPELLPEMLLSEERPPQEGLSRKDLFEGRPPMEQPPCGVGKHKLEEGSFKERLARSRPQFKGDIHGRNLSNEEMIQAADELEEMKRVRNKLMIMHWKAKRSRPYPI.

A disordered region spans residues 1 to 121 (MDKPRKENEE…QFKGDIHGRN (121 aa)). Residues 17 to 34 (KTDEERPPVEHSPEKQSP) are compositionally biased toward basic and acidic residues. Positions 37-54 (QSSEEQSSEEEFFPEELL) are enriched in acidic residues. Basic and acidic residues-rich tracts occupy residues 64–80 (SEERPPQEGLSRKDLFE) and 95–119 (HKLEEGSFKERLARSRPQFKGDIHG).

The protein belongs to the TFS-II family. TFA subfamily.

It is found in the nucleus. Functionally, may be involved in transcriptional regulation. Modulates various viral and cellular promoters in a promoter context-dependent manner. Does not bind DNA directly. The protein is Transcription elongation factor A protein-like 1 of Gorilla gorilla gorilla (Western lowland gorilla).